Reading from the N-terminus, the 128-residue chain is Large ribosomal subunit protein bL17 (128 aa).

This sequence belongs to the bacterial ribosomal protein bL17 family. In terms of assembly, part of the 50S ribosomal subunit. Contacts protein L32.

The polypeptide is Large ribosomal subunit protein bL17 (Edwardsiella ictaluri (strain 93-146)).